The sequence spans 1173 residues: DNA polymerase catalytic subunit (1173 aa).

Disordered stretches follow at residues 554–625 and 1123–1144; these read PSLP…SASG and EGPGRGEGLGVGGGEGTRPPRK. Residues 564–578 show a composition bias toward gly residues; it reads GGDGAGLEGGDGGTA. Residues 591–606 are compositionally biased toward acidic residues; sequence DGEDEDDPEGGDEGEN. Basic and acidic residues predominate over residues 607–618; sequence GECRENGLEKEG. Positions 1123–1138 are enriched in gly residues; that stretch reads EGPGRGEGLGVGGGEG.

The protein belongs to the DNA polymerase type-B family.

The protein resides in the host nucleus. The catalysed reaction is DNA(n) + a 2'-deoxyribonucleoside 5'-triphosphate = DNA(n+1) + diphosphate. The polypeptide is DNA polymerase catalytic subunit (UL54) (Rattus).